Consider the following 759-residue polypeptide: Putative ATP-dependent DNA helicase YjcD (759 aa).

The tract at residues Ala-68 to Pro-121 is disordered. Basic and acidic residues predominate over residues Cys-69–Asp-81. The UvrD-like helicase ATP-binding domain occupies Val-134 to Thr-413. ATP contacts are provided by residues Gly-158–Arg-163 and Arg-411. One can recognise a UvrD-like helicase C-terminal domain in the interval His-414–Gly-676.

It belongs to the helicase family. UvrD subfamily.

Its subcellular location is the cytoplasm. The catalysed reaction is Couples ATP hydrolysis with the unwinding of duplex DNA by translocating in the 3'-5' direction.. It catalyses the reaction ATP + H2O = ADP + phosphate + H(+). In terms of biological role, may be involved in the generation of recombinogenic substrates for the subsequent action of RecA. The protein is Putative ATP-dependent DNA helicase YjcD (yjcD) of Bacillus subtilis (strain 168).